Here is a 433-residue protein sequence, read N- to C-terminus: Enolase 2 (433 aa).

The disordered stretch occupies residues 34–56 (RGMVPSGASTGEHEAVELRDGDK). Residues 44–56 (GEHEAVELRDGDK) show a composition bias toward basic and acidic residues. Gln-163 lines the (2R)-2-phosphoglycerate pocket. The Proton donor role is filled by Glu-205. Residues Asp-243, Glu-290, and Asp-317 each contribute to the Mg(2+) site. 4 residues coordinate (2R)-2-phosphoglycerate: Lys-342, Arg-371, Ser-372, and Lys-393. Catalysis depends on Lys-342, which acts as the Proton acceptor.

It belongs to the enolase family. Mg(2+) serves as cofactor.

It localises to the cytoplasm. Its subcellular location is the secreted. It is found in the cell surface. It catalyses the reaction (2R)-2-phosphoglycerate = phosphoenolpyruvate + H2O. It participates in carbohydrate degradation; glycolysis; pyruvate from D-glyceraldehyde 3-phosphate: step 4/5. Functionally, catalyzes the reversible conversion of 2-phosphoglycerate (2-PG) into phosphoenolpyruvate (PEP). It is essential for the degradation of carbohydrates via glycolysis. This is Enolase 2 from Lactococcus lactis subsp. cremoris (strain SK11).